An 86-amino-acid polypeptide reads, in one-letter code: Conotoxin S6.10 (86 aa).

An N-terminal signal peptide occupies residues M1 to A22. Residues K23–T45 constitute a propeptide that is removed on maturation. 3 cysteine pairs are disulfide-bonded: C48–C62, C55–C66, and C61–C73.

The protein belongs to the conotoxin O1 superfamily. In terms of tissue distribution, expressed by the venom duct.

It is found in the secreted. The protein is Conotoxin S6.10 of Conus striatus (Striated cone).